The following is a 142-amino-acid chain: Large ribosomal subunit protein uL11 (142 aa).

The protein belongs to the universal ribosomal protein uL11 family. In terms of assembly, part of the ribosomal stalk of the 50S ribosomal subunit. Interacts with L10 and the large rRNA to form the base of the stalk. L10 forms an elongated spine to which L12 dimers bind in a sequential fashion forming a multimeric L10(L12)X complex. Post-translationally, one or more lysine residues are methylated.

Functionally, forms part of the ribosomal stalk which helps the ribosome interact with GTP-bound translation factors. This Mannheimia succiniciproducens (strain KCTC 0769BP / MBEL55E) protein is Large ribosomal subunit protein uL11.